A 206-amino-acid chain; its full sequence is Small ribosomal subunit protein uS4 (206 aa).

Residues asparagine 18–serine 46 are disordered. The region spanning arginine 94–isoleucine 154 is the S4 RNA-binding domain.

Belongs to the universal ribosomal protein uS4 family. Part of the 30S ribosomal subunit. Contacts protein S5. The interaction surface between S4 and S5 is involved in control of translational fidelity.

One of the primary rRNA binding proteins, it binds directly to 16S rRNA where it nucleates assembly of the body of the 30S subunit. In terms of biological role, with S5 and S12 plays an important role in translational accuracy. This chain is Small ribosomal subunit protein uS4, found in Roseobacter denitrificans (strain ATCC 33942 / OCh 114) (Erythrobacter sp. (strain OCh 114)).